We begin with the raw amino-acid sequence, 401 residues long: Argininosuccinate synthase (401 aa).

8 to 16 (AYSGGLDTS) contributes to the ATP binding site. Residue tyrosine 85 coordinates L-citrulline. Glycine 115 serves as a coordination point for ATP. L-aspartate is bound by residues threonine 117, asparagine 121, and aspartate 122. An L-citrulline-binding site is contributed by asparagine 121. Residues arginine 125, serine 173, serine 182, glutamate 258, and tyrosine 270 each contribute to the L-citrulline site.

It belongs to the argininosuccinate synthase family. Type 1 subfamily. As to quaternary structure, homotetramer.

It localises to the cytoplasm. The enzyme catalyses L-citrulline + L-aspartate + ATP = 2-(N(omega)-L-arginino)succinate + AMP + diphosphate + H(+). Its pathway is amino-acid biosynthesis; L-arginine biosynthesis; L-arginine from L-ornithine and carbamoyl phosphate: step 2/3. This is Argininosuccinate synthase from Staphylococcus saprophyticus subsp. saprophyticus (strain ATCC 15305 / DSM 20229 / NCIMB 8711 / NCTC 7292 / S-41).